A 686-amino-acid polypeptide reads, in one-letter code: Methionine--tRNA ligase (686 aa).

Residues 15-25 (PYANGSIHLGH) carry the 'HIGH' region motif. The Zn(2+) site is built by Cys-146, Cys-149, Cys-159, and Cys-162. Positions 332–336 (KMSKS) match the 'KMSKS' region motif. ATP is bound at residue Lys-335. A tRNA-binding domain is found at 585–686 (AFEAVDMRIA…EGAQPGMRVM (102 aa)).

Belongs to the class-I aminoacyl-tRNA synthetase family. MetG type 1 subfamily. In terms of assembly, homodimer. It depends on Zn(2+) as a cofactor.

The protein localises to the cytoplasm. It carries out the reaction tRNA(Met) + L-methionine + ATP = L-methionyl-tRNA(Met) + AMP + diphosphate. In terms of biological role, is required not only for elongation of protein synthesis but also for the initiation of all mRNA translation through initiator tRNA(fMet) aminoacylation. The protein is Methionine--tRNA ligase of Aliivibrio fischeri (strain MJ11) (Vibrio fischeri).